The chain runs to 58 residues: Ribosome modulation factor (58 aa).

Belongs to the ribosome modulation factor family.

Its subcellular location is the cytoplasm. In terms of biological role, during stationary phase, converts 70S ribosomes to an inactive dimeric form (100S ribosomes). The chain is Ribosome modulation factor from Tolumonas auensis (strain DSM 9187 / NBRC 110442 / TA 4).